A 267-amino-acid chain; its full sequence is L-aspartate dehydrogenase (267 aa).

Residues A124 and N190 each coordinate NAD(+). Residue H218 is part of the active site.

This sequence belongs to the L-aspartate dehydrogenase family.

The enzyme catalyses L-aspartate + NADP(+) + H2O = oxaloacetate + NH4(+) + NADPH + H(+). It carries out the reaction L-aspartate + NAD(+) + H2O = oxaloacetate + NH4(+) + NADH + H(+). Its pathway is cofactor biosynthesis; NAD(+) biosynthesis; iminoaspartate from L-aspartate (dehydrogenase route): step 1/1. Functionally, specifically catalyzes the NAD or NADP-dependent dehydrogenation of L-aspartate to iminoaspartate. The chain is L-aspartate dehydrogenase from Methanococcus maripaludis (strain C7 / ATCC BAA-1331).